The primary structure comprises 538 residues: Non-specific phospholipase C4 (538 aa).

Residues 91 to 112 are disordered; that stretch reads KPWDSGKPDPNPGHPNMSGFAQ.

The protein belongs to the bacterial phospholipase C family. In terms of tissue distribution, expressed in root tips, cotyledons, on leaf margins, stems, young anthers and funiculus.

It is found in the cell membrane. It catalyses the reaction a 1,2-diacyl-sn-glycero-3-phosphocholine + H2O = phosphocholine + a 1,2-diacyl-sn-glycerol + H(+). Non-specific phospholipase C (PLC) which assumes major PLC activity during inorganic phosphate starvation. Substrate preference is phosphatidylcholine (PC), but can also hydrolyze phosphatidylethanolamine (PE) with lower efficiency. Has no activity toward phosphatidic acid (PA). Plays an important role in the supply of both inorganic phosphate and diacylglycerol from membrane-localized phospholipids during phosphate deprivation. May be required for lipid-derived signaling molecules that positively modulate abscisic acid (ABA) response and promote plant tolerance to drought and salt stresses. May be involved in brassinolide-mediated signaling in root development. In Arabidopsis thaliana (Mouse-ear cress), this protein is Non-specific phospholipase C4 (NPC4).